Reading from the N-terminus, the 296-residue chain is Cadherin-4 (296 aa).

3 consecutive Cadherin domains span residues 1–101 (NVPE…RPEF), 102–216 (INQV…PPEF), and 217–296 (TTST…MLTI). The Extracellular segment spans residues 1 to 296 (NVPENSRGPF…ELNRAFMLTI (296 aa)). N107 and N236 each carry an N-linked (GlcNAc...) asparagine glycan.

It localises to the cell membrane. Cadherins are calcium-dependent cell adhesion proteins. They preferentially interact with themselves in a homophilic manner in connecting cells; cadherins may thus contribute to the sorting of heterogeneous cell types. May play an important role in retinal development. The chain is Cadherin-4 (Cdh4) from Rattus norvegicus (Rat).